A 223-amino-acid chain; its full sequence is uncharacterized protein (223 aa).

An HTH tetR-type domain is found at 11–71 (EATFESFIDA…YLLEKRQMKK (61 aa)). A DNA-binding region (H-T-H motif) is located at residues 34–53 (SVEDISRAAGYSKGAFYVHF).

This is an uncharacterized protein from Bacillus subtilis (strain 168).